A 1093-amino-acid polypeptide reads, in one-letter code: Protein translocase subunit SecA (1093 aa).

Residues glutamine 84, 102 to 106 (GEGKT), and aspartate 491 each bind ATP. Disordered regions lie at residues 837–869 (QNLQ…SEHE) and 904–1062 (SELE…TSEA). Composition is skewed to basic and acidic residues over residues 904–937 (SELE…DATK), 944–971 (EELK…EKLK), and 978–1062 (PKDL…TSEA).

Belongs to the SecA family. Monomer and homodimer. Part of the essential Sec protein translocation apparatus which comprises SecA, SecYEG and auxiliary proteins SecDF. Other proteins may also be involved.

The protein localises to the cell membrane. It localises to the cytoplasm. The catalysed reaction is ATP + H2O + cellular proteinSide 1 = ADP + phosphate + cellular proteinSide 2.. Functionally, part of the Sec protein translocase complex. Interacts with the SecYEG preprotein conducting channel. Has a central role in coupling the hydrolysis of ATP to the transfer of proteins into and across the cell membrane, serving as an ATP-driven molecular motor driving the stepwise translocation of polypeptide chains across the membrane. The chain is Protein translocase subunit SecA from Mycoplasmopsis synoviae (strain 53) (Mycoplasma synoviae).